The sequence spans 287 residues: Nucleotide-binding protein Asuc_0930 (287 aa).

8–15 contacts ATP; the sequence is GRSGAGKS. A GTP-binding site is contributed by 56 to 59; sequence DIRN.

It belongs to the RapZ-like family.

Functionally, displays ATPase and GTPase activities. In Actinobacillus succinogenes (strain ATCC 55618 / DSM 22257 / CCUG 43843 / 130Z), this protein is Nucleotide-binding protein Asuc_0930.